Reading from the N-terminus, the 793-residue chain is DnaJ homolog subfamily C member 10 (793 aa).

Positions 1–32 (MGVWLNKDDFIRDLKRISLCLLILYVVVVVGT) are cleaved as a signal peptide. Residues 35-100 (NFYSLLGVSK…DLRKKYDKYG (66 aa)) form the J domain. The 103-residue stretch at 130–232 (EIITLERREF…ESLVAFAMQH (103 aa)) folds into the Thioredoxin 1 domain. C158 and C161 are oxidised to a cystine. Trxb regions lie at residues 235–350 (STVT…LPDF) and 348–463 (PDFE…PQNF). Thioredoxin domains follow at residues 454-553 (HVTT…IEDL), 557-665 (SVVS…SWGL), and 671-776 (ASID…ALIY). Cysteines 480 and 483 form a disulfide. An N-linked (GlcNAc...) asparagine glycan is attached at N530. 2 disulfide bridges follow: C588-C591 and C700-C703. The Prevents secretion from ER signature appears at 790–793 (KDEL).

Interacts with HSPA5 (via its J domain). Interacts with EDEM1. In terms of tissue distribution, ubiquitous. Particularly abundant in secretory tissues. Ubiquitous in fetal tissues and tumor tissues. Higher expression in fetal tissues than in adult tissues. Expressed in testis, pancreas, fetal thymus and fetal kidney. High expression in heart, liver, kidney, and testis. Low expression in spleen and skeletal muscle.

Its subcellular location is the endoplasmic reticulum lumen. Its function is as follows. Endoplasmic reticulum disulfide reductase involved both in the correct folding of proteins and degradation of misfolded proteins. Required for efficient folding of proteins in the endoplasmic reticulum by catalyzing the removal of non-native disulfide bonds formed during the folding of proteins, such as LDLR. Also involved in endoplasmic reticulum-associated degradation (ERAD) by reducing incorrect disulfide bonds in misfolded glycoproteins recognized by EDEM1. Interaction with HSPA5 is required its activity, not for the disulfide reductase activity, but to facilitate the release of DNAJC10 from its substrate. Promotes apoptotic signaling pathway in response to endoplasmic reticulum stress. This is DnaJ homolog subfamily C member 10 (Dnajc10) from Mus musculus (Mouse).